Here is a 377-residue protein sequence, read N- to C-terminus: Succinyl-diaminopimelate desuccinylase (377 aa).

A Zn(2+)-binding site is contributed by histidine 66. The active site involves aspartate 68. A Zn(2+)-binding site is contributed by aspartate 99. Glutamate 133 serves as the catalytic Proton acceptor. Glutamate 134, glutamate 162, and histidine 348 together coordinate Zn(2+).

Belongs to the peptidase M20A family. DapE subfamily. As to quaternary structure, homodimer. Requires Zn(2+) as cofactor. Co(2+) is required as a cofactor.

It catalyses the reaction N-succinyl-(2S,6S)-2,6-diaminopimelate + H2O = (2S,6S)-2,6-diaminopimelate + succinate. The protein operates within amino-acid biosynthesis; L-lysine biosynthesis via DAP pathway; LL-2,6-diaminopimelate from (S)-tetrahydrodipicolinate (succinylase route): step 3/3. In terms of biological role, catalyzes the hydrolysis of N-succinyl-L,L-diaminopimelic acid (SDAP), forming succinate and LL-2,6-diaminopimelate (DAP), an intermediate involved in the bacterial biosynthesis of lysine and meso-diaminopimelic acid, an essential component of bacterial cell walls. The chain is Succinyl-diaminopimelate desuccinylase from Histophilus somni (strain 2336) (Haemophilus somnus).